The chain runs to 66 residues: Putative ankyrin repeat protein RF_pd14 (66 aa).

Residues 14–66 form an ANK repeat; that stretch reads KLNQKLMRAAATGDIEAVQKLVLRGADIYCRDHQGDTALSLAAGSGYLDILDI.

The chain is Putative ankyrin repeat protein RF_pd14 from Rickettsia felis (strain ATCC VR-1525 / URRWXCal2) (Rickettsia azadi).